A 215-amino-acid chain; its full sequence is Pyrrolidone-carboxylate peptidase (215 aa).

Catalysis depends on residues Glu-80, Cys-143, and His-167.

Belongs to the peptidase C15 family. As to quaternary structure, homotetramer.

The protein resides in the cytoplasm. The enzyme catalyses Release of an N-terminal pyroglutamyl group from a polypeptide, the second amino acid generally not being Pro.. Removes 5-oxoproline from various penultimate amino acid residues except L-proline. In Bacillus cereus (strain 03BB102), this protein is Pyrrolidone-carboxylate peptidase.